A 482-amino-acid chain; its full sequence is tRNA sulfurtransferase (482 aa).

One can recognise a THUMP domain in the interval 61–165 (AAIVAELTRI…DERLILVTAR (105 aa)). ATP contacts are provided by residues 183-184 (LI), K265, G287, and Q296. A disulfide bridge connects residues C344 and C456. The 79-residue stretch at 404–482 (FSHNDVILDI…GFKNVKVYRP (79 aa)) folds into the Rhodanese domain. Catalysis depends on C456, which acts as the Cysteine persulfide intermediate.

This sequence belongs to the ThiI family.

The protein resides in the cytoplasm. The catalysed reaction is [ThiI sulfur-carrier protein]-S-sulfanyl-L-cysteine + a uridine in tRNA + 2 reduced [2Fe-2S]-[ferredoxin] + ATP + H(+) = [ThiI sulfur-carrier protein]-L-cysteine + a 4-thiouridine in tRNA + 2 oxidized [2Fe-2S]-[ferredoxin] + AMP + diphosphate. The enzyme catalyses [ThiS sulfur-carrier protein]-C-terminal Gly-Gly-AMP + S-sulfanyl-L-cysteinyl-[cysteine desulfurase] + AH2 = [ThiS sulfur-carrier protein]-C-terminal-Gly-aminoethanethioate + L-cysteinyl-[cysteine desulfurase] + A + AMP + 2 H(+). The protein operates within cofactor biosynthesis; thiamine diphosphate biosynthesis. In terms of biological role, catalyzes the ATP-dependent transfer of a sulfur to tRNA to produce 4-thiouridine in position 8 of tRNAs, which functions as a near-UV photosensor. Also catalyzes the transfer of sulfur to the sulfur carrier protein ThiS, forming ThiS-thiocarboxylate. This is a step in the synthesis of thiazole, in the thiamine biosynthesis pathway. The sulfur is donated as persulfide by IscS. This chain is tRNA sulfurtransferase, found in Erwinia tasmaniensis (strain DSM 17950 / CFBP 7177 / CIP 109463 / NCPPB 4357 / Et1/99).